The sequence spans 613 residues: UvrABC system protein C (613 aa).

Positions 13 to 92 constitute a GIY-YIG domain; it reads DKSGVYIMKD…IKKYKPKYNI (80 aa). Positions 204–239 constitute a UVR domain; sequence DEIINDLRIQMETAAEQLDFEKAAQLRNKITSIKQL.

Belongs to the UvrC family. As to quaternary structure, interacts with UvrB in an incision complex.

Its subcellular location is the cytoplasm. The UvrABC repair system catalyzes the recognition and processing of DNA lesions. UvrC both incises the 5' and 3' sides of the lesion. The N-terminal half is responsible for the 3' incision and the C-terminal half is responsible for the 5' incision. The sequence is that of UvrABC system protein C from Ruminiclostridium cellulolyticum (strain ATCC 35319 / DSM 5812 / JCM 6584 / H10) (Clostridium cellulolyticum).